Here is a 294-residue protein sequence, read N- to C-terminus: MAVQKYTVALFLAMALVAGPAASYAADAGTPPTPATPAVPGAAAGKATTHEQKLIEDINAAFKWWPASAPPADKYKTFETAFSKANIAGASTKGLDAAYSVVYNTAAGATPEAKYDSFVTALTEALRIMAGTLEVHAVKPATEEEVPSAKILRANSRSSTRSSRFKIAATVATPLSHSTAANSAPANDKFTVFEGAFNKAIKERHGGPTETYKFIPSLEAAVKQAYGATVARAPEVKYAVFEAGLTKAITAMSEAQKVAKPVRLSPQPPQVLPLAAGGAATVAAASDSRGGYKV.

A signal peptide spans 1–25 (MAVQKYTVALFLAMALVAGPAASYA).

This sequence belongs to the Poa p IX/Phl p VI allergen family.

This Phalaris aquatica (Canary grass) protein is Major pollen allergen Pha a 5.3.